Consider the following 207-residue polypeptide: Small ribosomal subunit protein uS3c (207 aa).

Positions 39–109 constitute a KH type-2 domain; that stretch reads IRDYIFTNLL…QLKINIIDVT (71 aa).

Belongs to the universal ribosomal protein uS3 family. Part of the 30S ribosomal subunit.

It localises to the plastid. Its subcellular location is the chloroplast. The sequence is that of Small ribosomal subunit protein uS3c (rps3) from Cyanidium caldarium (Red alga).